Here is a 93-residue protein sequence, read N- to C-terminus: Beta-defensin 128 (93 aa).

A signal peptide spans 1-18 (MKLFLVLIILLFEVLTDG). Cystine bridges form between C24–C52, C32–C46, and C36–C53.

The protein belongs to the beta-defensin family.

Its subcellular location is the secreted. Its function is as follows. Has antibacterial activity. The chain is Beta-defensin 128 (DEFB128) from Homo sapiens (Human).